Here is a 312-residue protein sequence, read N- to C-terminus: Lipoyl synthase (312 aa).

7 residues coordinate [4Fe-4S] cluster: Cys51, Cys56, Cys62, Cys77, Cys81, Cys84, and Ser290. Residues 63-280 form the Radical SAM core domain; sequence WSRKTATYLA…RTIGTSLGLF (218 aa).

The protein belongs to the radical SAM superfamily. Lipoyl synthase family. It depends on [4Fe-4S] cluster as a cofactor.

It is found in the cytoplasm. It carries out the reaction [[Fe-S] cluster scaffold protein carrying a second [4Fe-4S](2+) cluster] + N(6)-octanoyl-L-lysyl-[protein] + 2 oxidized [2Fe-2S]-[ferredoxin] + 2 S-adenosyl-L-methionine + 4 H(+) = [[Fe-S] cluster scaffold protein] + N(6)-[(R)-dihydrolipoyl]-L-lysyl-[protein] + 4 Fe(3+) + 2 hydrogen sulfide + 2 5'-deoxyadenosine + 2 L-methionine + 2 reduced [2Fe-2S]-[ferredoxin]. It participates in protein modification; protein lipoylation via endogenous pathway; protein N(6)-(lipoyl)lysine from octanoyl-[acyl-carrier-protein]: step 2/2. Its function is as follows. Catalyzes the radical-mediated insertion of two sulfur atoms into the C-6 and C-8 positions of the octanoyl moiety bound to the lipoyl domains of lipoate-dependent enzymes, thereby converting the octanoylated domains into lipoylated derivatives. The chain is Lipoyl synthase from Chlamydia caviae (strain ATCC VR-813 / DSM 19441 / 03DC25 / GPIC) (Chlamydophila caviae).